A 207-amino-acid polypeptide reads, in one-letter code: Protein GrpE (207 aa).

The disordered stretch occupies residues 1–31 (MSEHQTPPEEDLTVANGDSAEAVSEPDVTVA).

The protein belongs to the GrpE family. Homodimer.

Its subcellular location is the cytoplasm. In terms of biological role, participates actively in the response to hyperosmotic and heat shock by preventing the aggregation of stress-denatured proteins, in association with DnaK and GrpE. It is the nucleotide exchange factor for DnaK and may function as a thermosensor. Unfolded proteins bind initially to DnaJ; upon interaction with the DnaJ-bound protein, DnaK hydrolyzes its bound ATP, resulting in the formation of a stable complex. GrpE releases ADP from DnaK; ATP binding to DnaK triggers the release of the substrate protein, thus completing the reaction cycle. Several rounds of ATP-dependent interactions between DnaJ, DnaK and GrpE are required for fully efficient folding. The protein is Protein GrpE of Synechococcus elongatus (strain ATCC 33912 / PCC 7942 / FACHB-805) (Anacystis nidulans R2).